The following is a 68-amino-acid chain: Large ribosomal subunit protein bL28 (68 aa).

Residues 1–30 (MAKICDHCGKKPQSGNNVSHANNKSKRRFE) form a disordered region. Residues 13–22 (QSGNNVSHAN) show a composition bias toward polar residues.

The protein belongs to the bacterial ribosomal protein bL28 family.

The chain is Large ribosomal subunit protein bL28 from Solidesulfovibrio magneticus (strain ATCC 700980 / DSM 13731 / RS-1) (Desulfovibrio magneticus).